We begin with the raw amino-acid sequence, 118 residues long: V-type proton ATPase subunit G 3 (118 aa).

A compositionally biased stretch (polar residues) spans Met-1–Leu-12. A disordered region spans residues Met-1–Lys-37. Positions Ser-3–Gly-53 form a coiled coil. Positions Ala-14–Lys-26 are enriched in basic and acidic residues.

This sequence belongs to the V-ATPase G subunit family. In terms of assembly, V-ATPase is a heteromultimeric enzyme made up of two complexes: the ATP-hydrolytic V1 complex and the proton translocation V0 complex. The V1 complex consists of three catalytic AB heterodimers that form a heterohexamer, three peripheral stalks each consisting of EG heterodimers, one central rotor including subunits D and F, and the regulatory subunits C and H. The proton translocation complex V0 consists of the proton transport subunit a, a ring of proteolipid subunits c9c'', rotary subunit d, subunits e and f, and two accessory subunits.

Subunit of the V1 complex of vacuolar(H+)-ATPase (V-ATPase), a multisubunit enzyme composed of a peripheral complex (V1) that hydrolyzes ATP and a membrane integral complex (V0) that translocates protons. V-ATPase is responsible for acidifying and maintaining the pH of intracellular compartments and in some cell types, is targeted to the plasma membrane, where it is responsible for acidifying the extracellular environment. This Xenopus tropicalis (Western clawed frog) protein is V-type proton ATPase subunit G 3 (atp6v1g3).